We begin with the raw amino-acid sequence, 622 residues long: Mitochondrial distribution and morphology protein 34 (622 aa).

One can recognise an SMP-LTD domain in the interval 1–195; that stretch reads MAFNFNWSPL…LPAIIHRLSL (195 aa). Disordered stretches follow at residues 211-234, 303-322, 355-432, 445-464, 482-546, and 581-622; these read QVTN…DPVD, PSGL…SHVA, SMGA…IRQP, ERNA…PASR, SLQQ…QTHL, and KMGG…AYRH. Low complexity predominate over residues 214–225; that stretch reads NPPLEGPGLDPL. Over residues 360 to 372 the composition is skewed to basic residues; sequence RHSKAHARKRKKR. Residues 373-384 are compositionally biased toward basic and acidic residues; the sequence is VVDLRRRPKNTD. The segment covering 388 to 404 has biased composition (low complexity); sequence SVSGESEFTESTSAASV. Polar residues-rich tracts occupy residues 482–495 and 522–532; these read SLQQ…SKSL and NASNYTSSGDS. 2 stretches are compositionally biased toward low complexity: residues 533–543 and 592–601; these read QQQQQQQQQHQ and NNKNDNKNNN.

This sequence belongs to the MDM34 family. Component of the ER-mitochondria encounter structure (ERMES) or MDM complex, composed of MMM1, MDM10, MDM12 and MDM34.

Its subcellular location is the mitochondrion outer membrane. Functionally, component of the ERMES/MDM complex, which serves as a molecular tether to connect the endoplasmic reticulum (ER) and mitochondria. Components of this complex are involved in the control of mitochondrial shape and protein biogenesis, and function in nonvesicular lipid trafficking between the ER and mitochondria. MDM34 is required for the interaction of the ER-resident membrane protein MMM1 and the outer mitochondrial membrane-resident beta-barrel protein MDM10. This chain is Mitochondrial distribution and morphology protein 34, found in Ajellomyces capsulatus (strain G186AR / H82 / ATCC MYA-2454 / RMSCC 2432) (Darling's disease fungus).